The primary structure comprises 153 residues: Large ribosomal subunit protein bL9 (153 aa).

This sequence belongs to the bacterial ribosomal protein bL9 family.

Functionally, binds to the 23S rRNA. This chain is Large ribosomal subunit protein bL9, found in Mycoplasma mycoides subsp. mycoides SC (strain CCUG 32753 / NCTC 10114 / PG1).